Here is a 292-residue protein sequence, read N- to C-terminus: 4-hydroxy-tetrahydrodipicolinate synthase (292 aa).

T45 is a binding site for pyruvate. The active-site Proton donor/acceptor is Y133. K162 acts as the Schiff-base intermediate with substrate in catalysis. I204 provides a ligand contact to pyruvate.

Belongs to the DapA family. In terms of assembly, homotetramer; dimer of dimers.

The protein localises to the cytoplasm. The enzyme catalyses L-aspartate 4-semialdehyde + pyruvate = (2S,4S)-4-hydroxy-2,3,4,5-tetrahydrodipicolinate + H2O + H(+). It participates in amino-acid biosynthesis; L-lysine biosynthesis via DAP pathway; (S)-tetrahydrodipicolinate from L-aspartate: step 3/4. In terms of biological role, catalyzes the condensation of (S)-aspartate-beta-semialdehyde [(S)-ASA] and pyruvate to 4-hydroxy-tetrahydrodipicolinate (HTPA). The sequence is that of 4-hydroxy-tetrahydrodipicolinate synthase from Nitratidesulfovibrio vulgaris (strain ATCC 29579 / DSM 644 / CCUG 34227 / NCIMB 8303 / VKM B-1760 / Hildenborough) (Desulfovibrio vulgaris).